We begin with the raw amino-acid sequence, 464 residues long: ATP synthase subunit beta (464 aa).

154–161 serves as a coordination point for ATP; it reads GGAGVGKT.

It belongs to the ATPase alpha/beta chains family. As to quaternary structure, F-type ATPases have 2 components, CF(1) - the catalytic core - and CF(0) - the membrane proton channel. CF(1) has five subunits: alpha(3), beta(3), gamma(1), delta(1), epsilon(1). CF(0) has three main subunits: a(1), b(2) and c(9-12). The alpha and beta chains form an alternating ring which encloses part of the gamma chain. CF(1) is attached to CF(0) by a central stalk formed by the gamma and epsilon chains, while a peripheral stalk is formed by the delta and b chains.

The protein resides in the cell inner membrane. The catalysed reaction is ATP + H2O + 4 H(+)(in) = ADP + phosphate + 5 H(+)(out). Produces ATP from ADP in the presence of a proton gradient across the membrane. The catalytic sites are hosted primarily by the beta subunits. The protein is ATP synthase subunit beta of Blochmanniella floridana.